Here is a 176-residue protein sequence, read N- to C-terminus: Adenine phosphoribosyltransferase (176 aa).

The protein belongs to the purine/pyrimidine phosphoribosyltransferase family. In terms of assembly, homodimer.

Its subcellular location is the cytoplasm. The enzyme catalyses AMP + diphosphate = 5-phospho-alpha-D-ribose 1-diphosphate + adenine. It participates in purine metabolism; AMP biosynthesis via salvage pathway; AMP from adenine: step 1/1. In terms of biological role, catalyzes a salvage reaction resulting in the formation of AMP, that is energically less costly than de novo synthesis. The sequence is that of Adenine phosphoribosyltransferase from Borreliella burgdorferi (strain ZS7) (Borrelia burgdorferi).